The chain runs to 517 residues: Zinc finger protein 215 (517 aa).

The 79-residue stretch at 48–126 (RQKFRHFQYL…EDMVTLIEDV (79 aa)) folds into the SCAN box domain. A KRAB domain is found at 164 to 237 (VTFKDVVVEF…EKEIPRKTIF (74 aa)). C2H2-type zinc fingers lie at residues 379 to 401 (YECY…QIIH), 407 to 429 (YKCS…QKLH), 462 to 484 (YECV…QMIH), and 490 to 512 (FKCK…QKLH).

Belongs to the krueppel C2H2-type zinc-finger protein family.

The protein localises to the nucleus. May be involved in transcriptional regulation. This chain is Zinc finger protein 215 (ZNF215), found in Pongo abelii (Sumatran orangutan).